The sequence spans 276 residues: Pantothenate synthetase (276 aa).

27-34 (MGALHRGH) is a binding site for ATP. H34 serves as the catalytic Proton donor. Q58 is a binding site for (R)-pantoate. A beta-alanine-binding site is contributed by Q58. 147–150 (GKKD) contacts ATP. Q153 lines the (R)-pantoate pocket. ATP contacts are provided by residues V176 and 184 to 187 (LSSR).

It belongs to the pantothenate synthetase family. As to quaternary structure, homodimer.

It is found in the cytoplasm. It catalyses the reaction (R)-pantoate + beta-alanine + ATP = (R)-pantothenate + AMP + diphosphate + H(+). Its pathway is cofactor biosynthesis; (R)-pantothenate biosynthesis; (R)-pantothenate from (R)-pantoate and beta-alanine: step 1/1. Functionally, catalyzes the condensation of pantoate with beta-alanine in an ATP-dependent reaction via a pantoyl-adenylate intermediate. The polypeptide is Pantothenate synthetase (Helicobacter pylori (strain J99 / ATCC 700824) (Campylobacter pylori J99)).